Consider the following 238-residue polypeptide: Uracil-DNA glycosylase (238 aa).

Asp-81 (proton acceptor) is an active-site residue.

The protein belongs to the uracil-DNA glycosylase (UDG) superfamily. UNG family.

The protein resides in the cytoplasm. The enzyme catalyses Hydrolyzes single-stranded DNA or mismatched double-stranded DNA and polynucleotides, releasing free uracil.. In terms of biological role, excises uracil residues from the DNA which can arise as a result of misincorporation of dUMP residues by DNA polymerase or due to deamination of cytosine. In Corynebacterium efficiens (strain DSM 44549 / YS-314 / AJ 12310 / JCM 11189 / NBRC 100395), this protein is Uracil-DNA glycosylase.